A 152-amino-acid polypeptide reads, in one-letter code: MADVVVPTVAVPEAMPRYAMPGDAGADLTCRHDVDLAPGERAMVETGVRVALPDGYVGFVNPRSGLAARHGLSIVNAPGTIDSGYRGQINVLLVNTDPREPVHLDAGSRIAQLVVVPVVEAIFEPVEDLDDTERGQGGYGSTGVSAMPPVDG.

Substrate-binding positions include 63-65, Asn76, and 80-82; these read RSG and TID. A disordered region spans residues 129–152; it reads LDDTERGQGGYGSTGVSAMPPVDG.

This sequence belongs to the dUTPase family. Requires Mg(2+) as cofactor.

The catalysed reaction is dUTP + H2O = dUMP + diphosphate + H(+). Its pathway is pyrimidine metabolism; dUMP biosynthesis; dUMP from dCTP (dUTP route): step 2/2. This enzyme is involved in nucleotide metabolism: it produces dUMP, the immediate precursor of thymidine nucleotides and it decreases the intracellular concentration of dUTP so that uracil cannot be incorporated into DNA. This chain is Deoxyuridine 5'-triphosphate nucleotidohydrolase, found in Cutibacterium acnes (strain DSM 16379 / KPA171202) (Propionibacterium acnes).